A 1037-amino-acid chain; its full sequence is Importin-8 (1037 aa).

One can recognise an Importin N-terminal domain in the interval 22 to 102 (AENELNQSYK…RDNIVEGIIR (81 aa)). Positions 886–895 (DRSKAEKADM) are enriched in basic and acidic residues. Positions 886-934 (DRSKAEKADMEENEEISSDEEETNVTAQAMQSNNGRGEDEEEEDDDWDE) are disordered. Over residues 896–908 (EENEEISSDEEET) the composition is skewed to acidic residues. 2 positions are modified to phosphoserine: Ser-902 and Ser-903. The segment covering 909–920 (NVTAQAMQSNNG) has biased composition (polar residues). The span at 923–934 (EDEEEEDDDWDE) shows a compositional bias: acidic residues.

This sequence belongs to the importin beta family. In terms of assembly, forms a heterodimer with KPNB1. Interacts with SRP19. Interacts with RPL23A. Binds directly to nuclear pore complexes. Interacts with LRPPRC; the interaction occurs when LRPPRC is in its RNA-free form and promotes import of LRPPRC to the nucleus to allow for EIF4E-mediated export of mRNAS from the nucleus to the cytoplasm.

It is found in the cytoplasm. The protein localises to the nucleus. Its function is as follows. Involved in nuclear protein import, either by acting as autonomous nuclear transport receptor or as an adapter-like protein in association with the importin-beta subunit KPNB1. Acting autonomously, may serve as receptor for nuclear localization signals (NLS) and promote translocation of import substrates through the nuclear pore complex (NPC) by an energy requiring, Ran-dependent mechanism. At the nucleoplasmic side of the NPC, Ran binds to importin, the importin/substrate complex dissociates and importin is re-exported from the nucleus to the cytoplasm where GTP hydrolysis releases Ran. The directionality of nuclear import is thought to be conferred by an asymmetric distribution of the GTP- and GDP-bound forms of Ran between the cytoplasm and nucleus. In vitro mediates the nuclear import of the signal recognition particle protein SRP19. May also be involved in cytoplasm-to-nucleus shuttling of a broad spectrum of other cargos, including Argonaute-microRNAs complexes, the JUN protein, RELA/NF-kappa-B p65 subunit, the translation initiation factor EIF4E and a set of receptor-activated mothers against decapentaplegic homolog (SMAD) transcription factors that play a critical role downstream of the large family of transforming growth factor beta and bone morphogenetic protein (BMP) cytokines. This chain is Importin-8 (IPO8), found in Homo sapiens (Human).